The primary structure comprises 685 residues: MGLLSIPYQSKSKLWIAIFLVVWSLISMHFIWQSQANSGLILKNELSSTSSIPHEFEMLIDTNYPKFKPTSGHSGSQTYSNLFKNQDRNAAIFTILKNFDLEQRCQLYFKNVKNDKLIVDPDHDFKFDRFDYLNWDEYRDESIKRLKGDNDEFVATSSDLDTIKKNFDKAKSRIASDLQLLHDYFSHIKIYNQCYIDRNTSFIKKQHELIDGLNWKTSFKRSSFLSGKQIVTEQQMYPWLSQKSPEYNCLATGQTTKFAANKNSFLNTLKNNLNGKGIVMTIADAHIDYCIRLIHLLRYLKNTLPIQIIYTSNDLSAESKSQLHQASVSDFDGLPQQNITLVNVTPAIKPQYLHKFNEFGNKILAILFNTFEEMIFIDADAILIENPEKFFQLTKYKNSGALFFRDRNTSEYRPDHDIEMFLKLMNSQYDEIIFGLLQITEKTMSIPLFDRKISHVMESGLVLLNRKVHFSQPLIMANMNFFEPIRERVYGDKEMFWLSLSIIGDENYQFNSHPAAAIGQLTTYQERVKTFENPPSSFKSQEICANHPAHISDEDNHTLLWFNSGFQFCNQLEKVNYEDEFSHKERYSQFDTIDKFKTFWQSSLVIESAIIPPENTNSNGGDGYEPSVSWKHMEPYCAGYTWCAYSSIGNGDQANDRGLVINYSPEEIEHFKKLGEIWMRGYNYL.

The Cytoplasmic segment spans residues 1 to 13; it reads MGLLSIPYQSKSK. The helical transmembrane segment at 14–34 threads the bilayer; the sequence is LWIAIFLVVWSLISMHFIWQS. The Lumenal portion of the chain corresponds to 35–685; that stretch reads QANSGLILKN…EIWMRGYNYL (651 aa). Asn199, Asn338, Asn408, and Asn556 each carry an N-linked (GlcNAc...) asparagine glycan.

The protein belongs to the MNN1/MNT family.

The protein localises to the golgi apparatus membrane. Its pathway is protein modification; protein glycosylation. In terms of biological role, responsible for addition of the terminal mannose residues to the outer chain of core N-linked polysaccharides and to O-linked mannotriose. Implicated in late Golgi modifications. Involved in virulence. The protein is Putative alpha-1,3-mannosyltransferase MNN14 (MNN14) of Candida albicans (strain SC5314 / ATCC MYA-2876) (Yeast).